A 908-amino-acid polypeptide reads, in one-letter code: Hyphal wall protein 2 (908 aa).

The signal sequence occupies residues 1 to 20; that stretch reads MRFATTQLATLACFILTAEA. 3 stretches are compositionally biased toward low complexity: residues 110-187, 266-324, and 332-405; these read PKTA…TTSK, ESTT…TMKH, and HATT…KSST. 2 disordered regions span residues 110–221 and 263–477; these read PKTA…PSKT and TETE…IPKY. Over residues 406–416 the composition is skewed to polar residues; sequence PASTLEYSTSI. Residues 422–477 are compositionally biased toward low complexity; that stretch reads TTSNSLSTKSTTLTTISRSSTSGSSVPNTTRESSTSTTTPNSSSSESKVSSAIPKY. N-linked (GlcNAc...) asparagine glycosylation is found at asparagine 449, asparagine 462, and asparagine 519. Positions 539-608 are enriched in low complexity; it reads GTTVRSSTSE…TSTTTPESSP (70 aa). Residues 539–700 are disordered; sequence GTTVRSSTSE…TSASETSSGS (162 aa). Positions 624-638 are enriched in polar residues; that stretch reads TMESSASTTKNSSIQ. The N-linked (GlcNAc...) asparagine glycan is linked to asparagine 634. 2 stretches are compositionally biased toward low complexity: residues 639 to 655 and 662 to 677; these read STSE…ESSV and SSVP…VVTT. An N-linked (GlcNAc...) asparagine glycan is attached at asparagine 684. A compositionally biased stretch (low complexity) spans 685 to 700; it reads TTLEHSTSASETSSGS. Residue asparagine 764 is glycosylated (N-linked (GlcNAc...) asparagine). The disordered stretch occupies residues 821–844; the sequence is VSTDVKPTTSSQGTKSTPVDTDSK. The GPI-anchor amidated glycine moiety is linked to residue glycine 887. Positions 888-908 are cleaved as a propeptide — removed in mature form; that stretch reads TGNNMKLSFGVVIAGVAAFAI.

Post-translationally, the GPI-anchor is attached to the protein in the endoplasmic reticulum and serves to target the protein to the cell surface. There, the glucosamine-inositol phospholipid moiety is cleaved off and the GPI-modified mannoprotein is covalently attached via its lipidless GPI glycan remnant to the 1,6-beta-glucan of the outer cell wall layer.

Its subcellular location is the secreted. The protein resides in the cell wall. The protein localises to the membrane. In terms of biological role, GPI-anchored cell wall protein required for mating efficiency, biofilm formation, adhesion, filamentous growth, and oxidative stress tolerance. Involved in normal disseminated infection in a mouse systemic candidiasis model. This chain is Hyphal wall protein 2 (HWP2), found in Candida albicans (strain SC5314 / ATCC MYA-2876) (Yeast).